Consider the following 111-residue polypeptide: UPF0125 protein SO_1475 (111 aa).

Positions 88–111 (VRRRRADKAKDEGRANKVTGGRVS) are disordered.

It belongs to the UPF0125 (RnfH) family.

This chain is UPF0125 protein SO_1475, found in Shewanella oneidensis (strain ATCC 700550 / JCM 31522 / CIP 106686 / LMG 19005 / NCIMB 14063 / MR-1).